Reading from the N-terminus, the 367-residue chain is UDP-N-acetylglucosamine--N-acetylmuramyl-(pentapeptide) pyrophosphoryl-undecaprenol N-acetylglucosamine transferase (367 aa).

Residues 15-17, N126, R169, S197, and Q298 contribute to the UDP-N-acetyl-alpha-D-glucosamine site; that span reads TGG.

Belongs to the glycosyltransferase 28 family. MurG subfamily.

It is found in the cell inner membrane. It carries out the reaction di-trans,octa-cis-undecaprenyl diphospho-N-acetyl-alpha-D-muramoyl-L-alanyl-D-glutamyl-meso-2,6-diaminopimeloyl-D-alanyl-D-alanine + UDP-N-acetyl-alpha-D-glucosamine = di-trans,octa-cis-undecaprenyl diphospho-[N-acetyl-alpha-D-glucosaminyl-(1-&gt;4)]-N-acetyl-alpha-D-muramoyl-L-alanyl-D-glutamyl-meso-2,6-diaminopimeloyl-D-alanyl-D-alanine + UDP + H(+). It functions in the pathway cell wall biogenesis; peptidoglycan biosynthesis. Functionally, cell wall formation. Catalyzes the transfer of a GlcNAc subunit on undecaprenyl-pyrophosphoryl-MurNAc-pentapeptide (lipid intermediate I) to form undecaprenyl-pyrophosphoryl-MurNAc-(pentapeptide)GlcNAc (lipid intermediate II). In Bradyrhizobium sp. (strain ORS 278), this protein is UDP-N-acetylglucosamine--N-acetylmuramyl-(pentapeptide) pyrophosphoryl-undecaprenol N-acetylglucosamine transferase.